Here is a 546-residue protein sequence, read N- to C-terminus: Type II methyltransferase M.XhoI (546 aa).

The protein belongs to the N(4)/N(6)-methyltransferase family.

The enzyme catalyses a 2'-deoxyadenosine in DNA + S-adenosyl-L-methionine = an N(6)-methyl-2'-deoxyadenosine in DNA + S-adenosyl-L-homocysteine + H(+). In terms of biological role, a gamma subtype methylase, recognizes the double-stranded sequence 5'-CTCGAG-3', methylates A-5 on both strands, and protects the DNA from cleavage by the XhoI endonuclease. The sequence is that of Type II methyltransferase M.XhoI from Xanthomonas vasicola.